The chain runs to 921 residues: Leucine--tRNA ligase (921 aa).

Residues Pro41 to His52 carry the 'HIGH' region motif. Residues Lys695–Ser699 carry the 'KMSKS' region motif. Lys698 lines the ATP pocket.

It belongs to the class-I aminoacyl-tRNA synthetase family.

It is found in the cytoplasm. The enzyme catalyses tRNA(Leu) + L-leucine + ATP = L-leucyl-tRNA(Leu) + AMP + diphosphate. The chain is Leucine--tRNA ligase from Cytophaga hutchinsonii (strain ATCC 33406 / DSM 1761 / CIP 103989 / NBRC 15051 / NCIMB 9469 / D465).